Consider the following 167-residue polypeptide: MSEVEFSHEYWMRHAMTLAKRAWDEREVPVGAVLVHNNRVIGEGWNRPIGRHDPTAHAEIMALRQGGLVMQNYRLIDATLYVTLEPCVMCAGAMIHSRIGRVVFGARDAKTGAAGSLMDVLHHPGMNHRVEITEGILADECAALLSDFFRMRRQEIKAQKKAQSSTD.

A CMP/dCMP-type deaminase domain is found at 6–117 (FSHEYWMRHA…DAKTGAAGSL (112 aa)). His57 serves as a coordination point for Zn(2+). The active-site Proton donor is the Glu59. The Zn(2+) site is built by Cys87 and Cys90.

Belongs to the cytidine and deoxycytidylate deaminase family. Homodimer. The cofactor is Zn(2+).

The enzyme catalyses adenosine(34) in tRNA + H2O + H(+) = inosine(34) in tRNA + NH4(+). Its function is as follows. Catalyzes the deamination of adenosine to inosine at the wobble position 34 of tRNA(Arg2). This Escherichia coli O157:H7 protein is tRNA-specific adenosine deaminase.